The chain runs to 192 residues: Adenine phosphoribosyltransferase 2 (192 aa).

The protein belongs to the purine/pyrimidine phosphoribosyltransferase family. As to quaternary structure, homodimer.

It is found in the cytoplasm. The enzyme catalyses AMP + diphosphate = 5-phospho-alpha-D-ribose 1-diphosphate + adenine. It functions in the pathway purine metabolism; AMP biosynthesis via salvage pathway; AMP from adenine: step 1/1. Functionally, catalyzes a salvage reaction resulting in the formation of AMP, that is energically less costly than de novo synthesis. May contribute to the recycling of adenine into adenylate nucleotides and the inactivation of cytokinins by phosphoribosylation. Possesses low activity toward adenine and cytokinins. This Arabidopsis thaliana (Mouse-ear cress) protein is Adenine phosphoribosyltransferase 2 (APT2).